Consider the following 116-residue polypeptide: HTH-type transcriptional regulator AnsR (116 aa).

An HTH cro/C1-type domain is found at 6–60 (LTELRKKKNWSLQYTADLLGIAKSTYAGYESGYRRPSLEALAMLADLFDTTCDEL). A DNA-binding region (H-T-H motif) is located at residues 17-36 (LQYTADLLGIAKSTYAGYES).

Functionally, transcriptional repressor for the ans operon coding for L-asparaginase and L-aspartase. NH4(+) may influence this repression. In Bacillus subtilis (strain 168), this protein is HTH-type transcriptional regulator AnsR (ansR).